A 273-amino-acid chain; its full sequence is Ribonuclease Z (273 aa).

Zn(2+)-binding residues include H61, H63, H146, D169, and H233.

It belongs to the RNase Z family. In terms of assembly, homodimer. Zn(2+) serves as cofactor.

The enzyme catalyses Endonucleolytic cleavage of RNA, removing extra 3' nucleotides from tRNA precursor, generating 3' termini of tRNAs. A 3'-hydroxy group is left at the tRNA terminus and a 5'-phosphoryl group is left at the trailer molecule.. Its function is as follows. Zinc phosphodiesterase, which displays some tRNA 3'-processing endonuclease activity. Probably involved in tRNA maturation, by removing a 3'-trailer from precursor tRNA. The sequence is that of Ribonuclease Z from Mycobacterium tuberculosis (strain ATCC 25177 / H37Ra).